The sequence spans 740 residues: 1,4-alpha-glucan branching enzyme GlgB (740 aa).

Aspartate 419 functions as the Nucleophile in the catalytic mechanism. Glutamate 472 serves as the catalytic Proton donor.

It belongs to the glycosyl hydrolase 13 family. GlgB subfamily. As to quaternary structure, monomer.

It carries out the reaction Transfers a segment of a (1-&gt;4)-alpha-D-glucan chain to a primary hydroxy group in a similar glucan chain.. It functions in the pathway glycan biosynthesis; glycogen biosynthesis. Catalyzes the formation of the alpha-1,6-glucosidic linkages in glycogen by scission of a 1,4-alpha-linked oligosaccharide from growing alpha-1,4-glucan chains and the subsequent attachment of the oligosaccharide to the alpha-1,6 position. The chain is 1,4-alpha-glucan branching enzyme GlgB from Paramagnetospirillum magneticum (strain ATCC 700264 / AMB-1) (Magnetospirillum magneticum).